A 312-amino-acid polypeptide reads, in one-letter code: DNA-directed RNA polymerase subunit alpha (312 aa).

The tract at residues Met-1–Asp-226 is alpha N-terminal domain (alpha-NTD). Positions Lys-243–Asp-312 are alpha C-terminal domain (alpha-CTD).

This sequence belongs to the RNA polymerase alpha chain family. In terms of assembly, homodimer. The RNAP catalytic core consists of 2 alpha, 1 beta, 1 beta' and 1 omega subunit. When a sigma factor is associated with the core the holoenzyme is formed, which can initiate transcription.

It carries out the reaction RNA(n) + a ribonucleoside 5'-triphosphate = RNA(n+1) + diphosphate. Functionally, DNA-dependent RNA polymerase catalyzes the transcription of DNA into RNA using the four ribonucleoside triphosphates as substrates. The protein is DNA-directed RNA polymerase subunit alpha of Lactobacillus delbrueckii subsp. bulgaricus (strain ATCC 11842 / DSM 20081 / BCRC 10696 / JCM 1002 / NBRC 13953 / NCIMB 11778 / NCTC 12712 / WDCM 00102 / Lb 14).